The chain runs to 188 residues: MKISANSIRTGNILVYNNDLWVVSKTPEHTQPGKGGAYVQVEMKNLKTGTKRNERFSSADYLEKAELEQKDYQFLYFEGDDLVLMDTKHFDQINISKEMLEEKLSFLTENMIVKIEFYNDKPLNIELPPTVILEISETDPVIKGATATASYKPAILENGIKVKVPQYLEIGEKIVVKTDDMTYVERAK.

This sequence belongs to the elongation factor P family.

It localises to the cytoplasm. Its pathway is protein biosynthesis; polypeptide chain elongation. In terms of biological role, involved in peptide bond synthesis. Stimulates efficient translation and peptide-bond synthesis on native or reconstituted 70S ribosomes in vitro. Probably functions indirectly by altering the affinity of the ribosome for aminoacyl-tRNA, thus increasing their reactivity as acceptors for peptidyl transferase. The chain is Elongation factor P from Rickettsia rickettsii (strain Iowa).